A 235-amino-acid chain; its full sequence is Large ribosomal subunit protein uL1 (235 aa).

The protein belongs to the universal ribosomal protein uL1 family. As to quaternary structure, part of the 50S ribosomal subunit.

In terms of biological role, binds directly to 23S rRNA. The L1 stalk is quite mobile in the ribosome, and is involved in E site tRNA release. Its function is as follows. Protein L1 is also a translational repressor protein, it controls the translation of the L11 operon by binding to its mRNA. The protein is Large ribosomal subunit protein uL1 of Nitratidesulfovibrio vulgaris (strain ATCC 29579 / DSM 644 / CCUG 34227 / NCIMB 8303 / VKM B-1760 / Hildenborough) (Desulfovibrio vulgaris).